A 387-amino-acid chain; its full sequence is Protein RecA, chromosomal (387 aa).

80–87 (GPESSGKT) serves as a coordination point for ATP. A disordered region spans residues 352–387 (EVAETTEDTSTKAKATKAKKEEKVVETEEIELELED). The segment covering 378-387 (TEEIELELED) has biased composition (acidic residues).

This sequence belongs to the RecA family.

It is found in the cytoplasm. Its function is as follows. Can catalyze the hydrolysis of ATP in the presence of single-stranded DNA, the ATP-dependent uptake of single-stranded DNA by duplex DNA, and the ATP-dependent hybridization of homologous single-stranded DNAs. It interacts with LexA causing its activation and leading to its autocatalytic cleavage. This Lactococcus lactis subsp. lactis (strain IL1403) (Streptococcus lactis) protein is Protein RecA, chromosomal.